The sequence spans 401 residues: Odorant receptor 88a (401 aa).

Over 1-26 (MKPTEIKKPYRMEEFLRPQMFQEVAQ) the chain is Cytoplasmic. A helical transmembrane segment spans residues 27–47 (MVHFQWRRNPVDNSMVNASMV). At 48–52 (PFCLS) the chain is on the extracellular side. A helical transmembrane segment spans residues 53-73 (AFLNVLFFGCNGWDIIGHFWL). Topologically, residues 74–142 (GHPANQNPPV…NFWQRYRFIR (69 aa)) are cytoplasmic. Residues 143–163 (IYSHLGGPMFCVVPLALFLLT) form a helical membrane-spanning segment. Topologically, residues 164–191 (HEGKDTPVAQHEQLLGGWLPCGVRKDPN) are extracellular. A helical membrane pass occupies residues 192 to 212 (FYLLVWSFDLMCTTCGVSFFV). Over 213-277 (TFDNLFNVMQ…LCRKYNDIFK (65 aa)) the chain is Cytoplasmic. The chain crosses the membrane as a helical span at residues 278–298 (VAFLVSNFVGAGSLCFYLFML). The Extracellular segment spans residues 299 to 303 (SETSD). The helical transmembrane segment at 304-324 (VLIIAQYILPTLVLVGFTFEI) threads the bilayer. The Cytoplasmic portion of the chain corresponds to 325–370 (CLRGTQLEKASEGLESSLRSQEWYLGSRRYRKFYLLWTQYCQRTQQ). A helical membrane pass occupies residues 371–391 (LGAFGLIQVNMVHFTEIMQLA). Residues 392 to 401 (YRLFTFLKSH) are Extracellular-facing.

This sequence belongs to the insect chemoreceptor superfamily. Heteromeric odorant receptor channel (TC 1.A.69) family. Or49a subfamily. Interacts with Orco. Complexes exist early in the endomembrane system in olfactory sensory neurons (OSNs), coupling these complexes to the conserved ciliary trafficking pathway. As to expression, expressed in olfactory sensory neurons in the antenna.

It is found in the cell membrane. In terms of biological role, odorant receptor which mediates acceptance or avoidance behavior, depending on its substrates. The odorant receptor repertoire encodes a large collection of odor stimuli that vary widely in identity, intensity, and duration. May form a complex with Orco to form odorant-sensing units, providing sensitive and prolonged odorant signaling and calcium permeability. The chain is Odorant receptor 88a (Or88a) from Drosophila melanogaster (Fruit fly).